Consider the following 186-residue polypeptide: Ribosome-recycling factor (186 aa).

This sequence belongs to the RRF family.

The protein localises to the cytoplasm. Its function is as follows. Responsible for the release of ribosomes from messenger RNA at the termination of protein biosynthesis. May increase the efficiency of translation by recycling ribosomes from one round of translation to another. This is Ribosome-recycling factor from Burkholderia ambifaria (strain ATCC BAA-244 / DSM 16087 / CCUG 44356 / LMG 19182 / AMMD) (Burkholderia cepacia (strain AMMD)).